The chain runs to 404 residues: Histidine--tRNA ligase (404 aa).

The protein belongs to the class-II aminoacyl-tRNA synthetase family.

The protein localises to the cytoplasm. It carries out the reaction tRNA(His) + L-histidine + ATP = L-histidyl-tRNA(His) + AMP + diphosphate + H(+). This Nanoarchaeum equitans (strain Kin4-M) protein is Histidine--tRNA ligase.